The primary structure comprises 917 residues: Hexokinase-1 (917 aa).

The residue at position 1 (M1) is an N-acetylmethionine. The segment at M1–Y10 is mitochondrial-binding peptide (MBP). Hexokinase domains follow at residues D16–A458 and A464–A906. Residues R30 and D84–S89 contribute to the ATP site. The interval D73–V207 is hexokinase small subdomain 1. D84–R91 is a binding site for D-glucose 6-phosphate. D-glucose is bound by residues S155, T172–K173, and N208–D209. The hexokinase large subdomain 1 stretch occupies residues N208 to S447. D-glucose 6-phosphate-binding residues include D209 and T232. Residues N235, E260, and Q291–E294 each bind D-glucose. The residue at position 337 (S337) is a Phosphoserine. N345 contributes to the ATP binding site. D413 to S415 provides a ligand contact to D-glucose 6-phosphate. Residue R425 to R426 participates in ATP binding. D-glucose 6-phosphate-binding positions include S449 and D532–T536. The tract at residues D521–V655 is hexokinase small subdomain 2. Residue D532–N537 participates in ATP binding. D-glucose contacts are provided by residues S603–F604, T620–K621, and N656–D657. The tract at residues N656–D895 is hexokinase large subdomain 2. Positions 657 and 680 each coordinate D-glucose 6-phosphate. T680 provides a ligand contact to ATP. Residues S682–N683, E708, and E742 contribute to the D-glucose site. ATP is bound by residues G747 to M748, T784 to S788, and T863 to L867. D-glucose 6-phosphate is bound by residues D861 to T863 and S897.

It belongs to the hexokinase family. In terms of assembly, monomer. Interacts with RABL2/RABL2A; binds preferentially to GTP-bound RABL2. Interacts with VDAC1. The HK1-VDAC1 complex interacts with ATF2. Interacts (via N-terminal spermatogenic cell-specific region) with PFKM (via C-terminus). Interacts with SMAD5.

Its subcellular location is the mitochondrion outer membrane. The protein localises to the cytoplasm. It is found in the cytosol. It catalyses the reaction a D-hexose + ATP = a D-hexose 6-phosphate + ADP + H(+). The catalysed reaction is D-fructose + ATP = D-fructose 6-phosphate + ADP + H(+). It carries out the reaction D-glucose + ATP = D-glucose 6-phosphate + ADP + H(+). The enzyme catalyses D-mannose + ATP = D-mannose 6-phosphate + ADP + H(+). It catalyses the reaction D-glucosamine + ATP = D-glucosamine 6-phosphate + ADP + H(+). Its pathway is carbohydrate metabolism; hexose metabolism. The protein operates within carbohydrate degradation; glycolysis; D-glyceraldehyde 3-phosphate and glycerone phosphate from D-glucose: step 1/4. Hexokinase is an allosteric enzyme inhibited by its product D-glucose 6-phosphate. Hexokinase activity is inhibited by N-acetyl-D-glucosamine. Catalyzes the phosphorylation of various hexoses, such as D-glucose, D-glucosamine, D-fructose, D-mannose and 2-deoxy-D-glucose, to hexose 6-phosphate (D-glucose 6-phosphate, D-glucosamine 6-phosphate, D-fructose 6-phosphate, D-mannose 6-phosphate and 2-deoxy-D-glucose 6-phosphate, respectively). Does not phosphorylate N-acetyl-D-glucosamine. Mediates the initial step of glycolysis by catalyzing phosphorylation of D-glucose to D-glucose 6-phosphate. Involved in innate immunity and inflammation by acting as a pattern recognition receptor for bacterial peptidoglycan. When released in the cytosol, N-acetyl-D-glucosamine component of bacterial peptidoglycan inhibits the hexokinase activity of HK1 and causes its dissociation from mitochondrial outer membrane, thereby activating the NLRP3 inflammasome. This Pongo abelii (Sumatran orangutan) protein is Hexokinase-1.